The primary structure comprises 493 residues: Transcript termination protein A18 (493 aa).

The 157-residue stretch at 100–256 (MIELKRPLYI…NSIINIAKLS (157 aa)) folds into the Helicase ATP-binding domain. 113 to 120 (LACGFGKT) is a binding site for ATP. Positions 206–209 (DESH) match the DESH box motif. Positions 309–456 (ILDTLVEEFK…IISLSVDKLG (148 aa)) constitute a Helicase C-terminal domain.

This sequence belongs to the helicase family. Poxviruses subfamily. Interacts with G2. Might be part of a transcription complex composed at least of G2, A18, and H5.

The protein localises to the virion. In terms of biological role, DNA helicase which seems to act as a postreplicative transcription termination factor. Involved in ATP-dependent release of nascent RNA. Forms a stable complex with single-stranded DNA, and to a lesser extent RNA. This Mus musculus (Mouse) protein is Transcript termination protein A18.